A 114-amino-acid chain; its full sequence is Probable acid stress chaperone HdeA (114 aa).

The signal sequence occupies residues 1–26 (MIKTLFNKNTALAAVAILALSGSAMA). Residues Cys46 and Cys94 are joined by a disulfide bond.

The protein belongs to the HdeA family.

The protein resides in the periplasm. Required for optimal acid stress protection. Exhibits a chaperone-like activity only at low pH by suppressing non-specifically the aggregation of denaturated periplasmic proteins. This Brucella ovis (strain ATCC 25840 / 63/290 / NCTC 10512) protein is Probable acid stress chaperone HdeA.